A 483-amino-acid polypeptide reads, in one-letter code: Aspartyl/glutamyl-tRNA(Asn/Gln) amidotransferase subunit B (483 aa).

Belongs to the GatB/GatE family. GatB subfamily. In terms of assembly, heterotrimer of A, B and C subunits.

The enzyme catalyses L-glutamyl-tRNA(Gln) + L-glutamine + ATP + H2O = L-glutaminyl-tRNA(Gln) + L-glutamate + ADP + phosphate + H(+). It catalyses the reaction L-aspartyl-tRNA(Asn) + L-glutamine + ATP + H2O = L-asparaginyl-tRNA(Asn) + L-glutamate + ADP + phosphate + 2 H(+). Its function is as follows. Allows the formation of correctly charged Asn-tRNA(Asn) or Gln-tRNA(Gln) through the transamidation of misacylated Asp-tRNA(Asn) or Glu-tRNA(Gln) in organisms which lack either or both of asparaginyl-tRNA or glutaminyl-tRNA synthetases. The reaction takes place in the presence of glutamine and ATP through an activated phospho-Asp-tRNA(Asn) or phospho-Glu-tRNA(Gln). The chain is Aspartyl/glutamyl-tRNA(Asn/Gln) amidotransferase subunit B from Rickettsia bellii (strain RML369-C).